A 254-amino-acid chain; its full sequence is Bowman-Birk type bran trypsin inhibitor (254 aa).

Positions 1 to 22 are cleaved as a signal peptide; it reads MSNTTMATSTILLFLLAGLAAA. The propeptide occupies 23–118; it reads HGDGDTTIRL…KCTAALDGLS (96 aa). 3 consecutive repeats follow at residues 46 to 120, 121 to 187, and 188 to 251; these read KPWD…LSME, RPWK…FCTP, and RPWG…CKPR. 9 disulfide bridges follow: Cys125–Cys185, Cys126–Cys143, Cys152–Cys159, Cys156–Cys172, Cys193–Cys248, Cys194–Cys209, Cys199–Cys207, Cys216–Cys223, and Cys220–Cys236. Positions 252-254 are excised as a propeptide; that stretch reads AEN.

Belongs to the Bowman-Birk serine protease inhibitor family.

This is Bowman-Birk type bran trypsin inhibitor (RBBI3.3) from Oryza sativa subsp. japonica (Rice).